The primary structure comprises 409 residues: MSMMLSNWALSPRYVGQRNLIHCTTLFHTLTRWAKDADDKYHDINLMYENMFTPSNDNVSILQDEGKSDYDTTKTSSMQEDISAFNKDLYNFYNIGYAKQIMSASQLENIVKAKGRFVIQSLSTSPYYNLALENYVFKNTPRAKRGPDNCRLVFYINDRCAVIGKNQNLWQEVDLAKLKSKNFELLRRFSGGGTVLHDLGNVNYSYLTSREKFETKFFNKMIIKWLNSLNPELRLDLNERGDIIQDGFKISGSAYKIAGGKAYHHATMLLNADLEQFSGLLEPSLPNNMEWESSGVHSVKSKIKNVGIITPNQFIAVVSERFQKTFKVDGEIPIYYCDEFKSINDEIKDAMNTLQSEQWKYFSGPKFSVKIKDKGLTIKVEKGMIYDCDRNDLIGLEFKGFLENIDSYT.

Positions 146 to 330 (GPDNCRLVFY…RFQKTFKVDG (185 aa)) constitute a BPL/LPL catalytic domain. Residues Arg-188, 193-196 (GTVL), and Lys-249 each bind ATP. Residue Lys-249 participates in (R)-lipoate binding.

Belongs to the LplA family. Monomer.

The enzyme catalyses L-lysyl-[lipoyl-carrier protein] + (R)-lipoate + ATP = N(6)-[(R)-lipoyl]-L-lysyl-[lipoyl-carrier protein] + AMP + diphosphate + H(+). It participates in protein modification; protein lipoylation via exogenous pathway; protein N(6)-(lipoyl)lysine from lipoate: step 1/2. Its pathway is protein modification; protein lipoylation via exogenous pathway; protein N(6)-(lipoyl)lysine from lipoate: step 2/2. Catalyzes both the ATP-dependent activation of exogenously supplied lipoate to lipoyl-AMP and the transfer of the activated lipoyl onto the lipoyl domains of lipoate-dependent enzymes. The sequence is that of Putative lipoate-protein ligase A (AIM22) from Saccharomyces cerevisiae (strain YJM789) (Baker's yeast).